Consider the following 456-residue polypeptide: MLTALQADLASVVEGVNLVWVLTVTFLIFFMHAGFAMLEAGQVRAKNVANQLTKNLLTWSIGVIVFFLLGAAVSAIVAGLTGGPATTVADAFMGLYAPDASATTAWVDWLFGAVFAMTAATIVSGAVAGRARLRAYLTYTILIAGVIYPVVVGVTWAGGFLNGLGFHDFAGGMIVHGMGGIAGLTAAWIIGPRMNRFNADGSANVIPGHSITFAVLGTLILAFGWYGFNVGTAAAPLAYSDGGVTLGSFAYVGRVALVTTLGMAAGALGAGGVAFYKTGKVDTLYVANGVLAGLVGITAIADDIVWPGALVVGLLAGAQLPIVFEFVEKRLRIDDVCAVFPVHGSAGVLGTLLYPVFAVPVWHEGASIVSLAVPQVVGVGVIAVWTFVATTAIFGGFRAIGQVRVSADHERQGLDTAEHGVDTYPEFGSPDADTGIRADGSGIPYGHGFMTTQEDE.

11 helical membrane passes run 18-38, 61-81, 109-129, 141-161, 170-190, 211-231, 255-275, 281-301, 304-324, 339-359, and 377-397; these read LVWV…FAML, IGVI…AGLT, WLFG…AVAG, ILIA…GGFL, AGGM…AWII, ITFA…FNVG, VALV…GVAF, VDTL…TAIA, IVWP…PIVF, VFPV…VFAV, and VGVG…FGGF.

It belongs to the ammonia transporter channel (TC 1.A.11.2) family. Homotrimer. Interacts with both GlnK1 and GlnK2 after ammonium shock.

The protein resides in the cell membrane. Its function is as follows. Involved in the uptake of ammonium/ammonia (NH(4)(+)/NH(3)). Transport is electrogenic. The sequence is that of Ammonium transporter Amt2 from Haloferax mediterranei (strain ATCC 33500 / DSM 1411 / JCM 8866 / NBRC 14739 / NCIMB 2177 / R-4) (Halobacterium mediterranei).